Here is a 555-residue protein sequence, read N- to C-terminus: Bifunctional epoxide hydrolase 2 (555 aa).

The phosphatase stretch occupies residues 1 to 224 (MTLRAAVFDL…KVTGIQLLNT (224 aa)). Mg(2+) is bound by residues D9 and D11. At K43 the chain carries N6-acetyllysine. Residue K55 is modified to N6-succinyllysine. 123–124 (TN) serves as a coordination point for phosphate. D185 provides a ligand contact to Mg(2+). K191 and K215 each carry N6-acetyllysine. Positions 235–555 (SDMSHGYVTV…ARNPPVVSKM (321 aa)) are epoxide hydrolase. Residues 259–531 (PAVCLCHGFP…CGHWTQMDKP (273 aa)) form the AB hydrolase-1 domain. Residue D335 is the Nucleophile of the active site. S370 is modified (phosphoserine). Position 383 (Y383) interacts with substrate. Residues K421 and K455 each carry the N6-succinyllysine modification. Y466 (proton donor) is an active-site residue. A lipid anchor (S-(15-deoxy-Delta12,14-prostaglandin J2-9-yl)cysteine) is attached at C522. H524 acts as the Proton acceptor in catalysis. The short motif at 553-555 (SKM) is the Microbody targeting signal element. K554 carries the post-translational modification N6-succinyllysine.

It belongs to the AB hydrolase superfamily. Epoxide hydrolase family. As to quaternary structure, homodimer. Requires Mg(2+) as cofactor. The N-terminus is blocked. In terms of processing, the covalent modification of cysteine by 15-deoxy-Delta12,14-prostaglandin-J2 is autocatalytic and reversible. It may occur as an alternative to other cysteine modifications, such as S-nitrosylation and S-palmitoylation.

The protein resides in the cytoplasm. Its subcellular location is the peroxisome. It catalyses the reaction an epoxide + H2O = an ethanediol. It carries out the reaction (9S,10S)-10-hydroxy-9-(phosphooxy)octadecanoate + H2O = (9S,10S)-9,10-dihydroxyoctadecanoate + phosphate. The catalysed reaction is 12-phosphooxy-(9Z)-octadecenoate + H2O = 12-hydroxy-(9Z)-octadecenoate + phosphate. The enzyme catalyses 12-phosphooxy-(9E)-octadecenoate + H2O = 12-hydroxy-(9E)-octadecenoate + phosphate. It catalyses the reaction 12-(phosphooxy)octadecanoate + H2O = 12-hydroxyoctadecanoate + phosphate. It carries out the reaction 8,9-epoxy-(5Z,11Z,14Z)-eicosatrienoate + H2O = 8,9-dihydroxy-(5Z,11Z,14Z)-eicosatrienoate. The catalysed reaction is 11,12-epoxy-(5Z,8Z,14Z)-eicosatrienoate + H2O = 11,12-dihydroxy-(5Z,8Z,14Z)-eicosatrienoate. The enzyme catalyses 14,15-epoxy-(5Z,8Z,11Z)-eicosatrienoate + H2O = 14,15-dihydroxy-(5Z,8Z,11Z)-eicosatrienoate. It catalyses the reaction 9,10-epoxy-(12Z)-octadecenoate + H2O = 9,10-dihydroxy-(12Z)-octadecenoate. It carries out the reaction 8-hydroxy-(11S,12S)-epoxy-(5Z,9E,14Z)-eicosatrienoate + H2O = (8,11R,12S)-trihydroxy-(5Z,9E,14Z)-eicosatrienoate. The catalysed reaction is 10-hydroxy-(11S,12S)-epoxy- (5Z,8Z,14Z)-eicosatrienoate + H2O = (10,11S,12R)-trihydroxy-(5Z,8Z,14Z)-eicosatrienoate. The enzyme catalyses 1-tetradecanoyl-sn-glycerol 3-phosphate + H2O = 1-tetradecanoyl-sn-glycerol + phosphate. It catalyses the reaction 1-octadecanoyl-sn-glycero-3-phosphate + H2O = 1-octadecanoyl-sn-glycerol + phosphate. It carries out the reaction 1-(5Z,8Z,11Z,14Z-eicosatetraenoyl)-sn-glycero-3-phosphate + H2O = 1-(5Z,8Z,11Z,14Z-eicosatetraenoyl)-sn-glycerol + phosphate. The catalysed reaction is 1-hexadecanoyl-sn-glycero-3-phosphate + H2O = 1-hexadecanoyl-sn-glycerol + phosphate. The enzyme catalyses 1-(9Z-octadecenoyl)-sn-glycero-3-phosphate + H2O = 1-(9Z-octadecenoyl)-sn-glycerol + phosphate. It catalyses the reaction (8S,9R)-epoxy-(5Z,11Z,14Z)-eicosatrienoate + H2O = (8S,9S)-dihydroxy-(5Z,11Z,14Z)-eicosatrienoate. It carries out the reaction (11S,12R)-epoxy-(5Z,8Z,14Z)-eicosatrienoate + H2O = (11R,12R)-dihydroxy-(5Z,8Z,14Z)-eicosatrienoate. The catalysed reaction is (11S,12R)-epoxy-(5Z,8Z,14Z)-eicosatrienoate + H2O = (11S,12S)-dihydroxy-(5Z,8Z,14Z)-eicosatrienoate. The enzyme catalyses (14S,15R)-epoxy-(5Z,8Z,11Z)-eicosatrienoate + H2O = (14R,15R)-dihydroxy-(5Z,8Z,11Z)-eicosatrienoate. It catalyses the reaction (14S,15R)-epoxy-(5Z,8Z,11Z)-eicosatrienoate + H2O = (14S,15S)-dihydroxy-(5Z,8Z,11Z)-eicosatrienoate. It carries out the reaction (11R,12S)-epoxy-(5Z,8Z,14Z)-eicosatrienoate + H2O = (11S,12S)-dihydroxy-(5Z,8Z,14Z)-eicosatrienoate. The catalysed reaction is (11R,12S)-epoxy-(5Z,8Z,14Z)-eicosatrienoate + H2O = (11R,12R)-dihydroxy-(5Z,8Z,14Z)-eicosatrienoate. The enzyme catalyses (8S,9R)-epoxy-(5Z,11Z,14Z)-eicosatrienoate + H2O = (8R,9R)-dihydroxy-(5Z,11Z,14Z)-eicosatrienoate. It catalyses the reaction (14R,15S)-epoxy-(5Z,8Z,11Z)-eicosatrienoate + H2O = (14R,15R)-dihydroxy-(5Z,8Z,11Z)-eicosatrienoate. Inhibited by 1-(1-acetylpiperidin-4-yl)-3-(4-(trifl uoromethoxy)phenyl)urea (TPAU), 1-cyclohexyl-3-dodecylurea (CDU), 12-(3-adamantan-1-yl-ureido)-dodecanoic acid (AUDA), 1-((3S, 5S, 7S)-adamantan-1-yl)-3-(5-(2-(2-ethoxyethoxy) ethoxy)pentyl)urea (AEPU), N-adamantyl-N[']-cyclohexyl urea (ACU), 4-(((1S, 4S)-4-(3-((3S, 5S, 7S)-adamantan-1-yl) ureido)cyclohexyl)oxy)benzoic acid (c-AUCB), 4-(((1R, 4R)-4-(3-((3S, 5S, 7S)-adamantan-1-yl)ureido)cyclohexyl)oxy)benzoic acid (t-AUCB), 4-(((1R, 4R)-4-(3-(4(trifluoromethoxy)phenyl)ureido)cyclohexyl)oxy)benzoic acid (t-TAUCB) and to a lesser extent by 8-(3-((3S, 5S, 7S)-adamantan-1-yl)ureido) octanoic acid (AUOA). Phosphatase activity is inhibited by dodecyl-phosphate, phospholipids such as phospho-lysophosphatidic acids and fatty acids such as palmitic acid and lauric acid. Bifunctional enzyme. The C-terminal domain has epoxide hydrolase activity and acts on epoxides (alkene oxides, oxiranes) and arene oxides. Plays a role in xenobiotic metabolism by degrading potentially toxic epoxides. Also determines steady-state levels of physiological mediators. In terms of biological role, bifunctional enzyme. The N-terminal domain has lipid phosphatase activity, with the highest activity towards threo-9,10-phosphonooxy-hydroxy-octadecanoic acid, followed by erythro-9,10-phosphonooxy-hydroxy-octadecanoic acid, 12-phosphonooxy-octadec-9Z-enoic acid and 12-phosphonooxy-octadec-9E-enoic acid. Has phosphatase activity toward lyso-glycerophospholipids with also some lower activity toward lysolipids of sphingolipid and isoprenoid phosphates. In Homo sapiens (Human), this protein is Bifunctional epoxide hydrolase 2.